An 888-amino-acid chain; its full sequence is Leucine--tRNA ligase (888 aa).

Residues 42-52 (PYPSGKLHMGH) carry the 'HIGH' region motif. The 'KMSKS' region motif lies at 640–644 (TMSKS). Lys-643 lines the ATP pocket.

It belongs to the class-I aminoacyl-tRNA synthetase family.

The protein localises to the cytoplasm. The catalysed reaction is tRNA(Leu) + L-leucine + ATP = L-leucyl-tRNA(Leu) + AMP + diphosphate. The sequence is that of Leucine--tRNA ligase from Polaromonas naphthalenivorans (strain CJ2).